Consider the following 109-residue polypeptide: Nucleoid-associated protein VIBHAR_03086 (109 aa).

Disordered stretches follow at residues 1-21 (MFGKGGMGNLMKQAQQMQDRM) and 88-109 (QKEKMASVTGGMQLPPGMKMPF).

The protein belongs to the YbaB/EbfC family. Homodimer.

Its subcellular location is the cytoplasm. It localises to the nucleoid. Binds to DNA and alters its conformation. May be involved in regulation of gene expression, nucleoid organization and DNA protection. The protein is Nucleoid-associated protein VIBHAR_03086 of Vibrio campbellii (strain ATCC BAA-1116).